A 212-amino-acid chain; its full sequence is Redox-sensing transcriptional repressor Rex (212 aa).

Residues 16-55 constitute a DNA-binding region (H-T-H motif); that stretch reads IYYRYLNILLDADKTRVSSTELSEAVKVDSATIRRDFSYF. Residue 90–95 coordinates NAD(+); sequence GVGNLG.

The protein belongs to the transcriptional regulatory Rex family. Homodimer.

The protein localises to the cytoplasm. Its function is as follows. Modulates transcription in response to changes in cellular NADH/NAD(+) redox state. This Levilactobacillus brevis (strain ATCC 367 / BCRC 12310 / CIP 105137 / JCM 1170 / LMG 11437 / NCIMB 947 / NCTC 947) (Lactobacillus brevis) protein is Redox-sensing transcriptional repressor Rex.